A 311-amino-acid polypeptide reads, in one-letter code: Putative protease MJ0651 (311 aa).

Ser-128 serves as the catalytic Nucleophile. The active-site Proton donor/acceptor is the Lys-180.

This sequence belongs to the peptidase S49 family.

The chain is Putative protease MJ0651 from Methanocaldococcus jannaschii (strain ATCC 43067 / DSM 2661 / JAL-1 / JCM 10045 / NBRC 100440) (Methanococcus jannaschii).